Consider the following 311-residue polypeptide: Malate dehydrogenase (311 aa).

NAD(+) contacts are provided by residues 7 to 13 and Asp34; that span reads GAAGGIG. Substrate is bound by residues Arg81 and Arg87. Residues Asn94 and 117-119 each bind NAD(+); that span reads ITN. The substrate site is built by Asn119 and Arg153. The Proton acceptor role is filled by His177. Met227 serves as a coordination point for NAD(+).

The protein belongs to the LDH/MDH superfamily. MDH type 1 family. Homodimer.

It catalyses the reaction (S)-malate + NAD(+) = oxaloacetate + NADH + H(+). Functionally, catalyzes the reversible oxidation of malate to oxaloacetate. The polypeptide is Malate dehydrogenase (Histophilus somni (strain 2336) (Haemophilus somnus)).